Here is a 112-residue protein sequence, read N- to C-terminus: Low molecular weight protein antigen 6 (112 aa).

The protein resides in the secreted. The polypeptide is Low molecular weight protein antigen 6 (cfp6) (Mycobacterium bovis (strain ATCC BAA-935 / AF2122/97)).